Here is a 279-residue protein sequence, read N- to C-terminus: 3-methyl-2-oxobutanoate hydroxymethyltransferase (279 aa).

Residues Asp-43 and Asp-82 each contribute to the Mg(2+) site. Residues 43–44 (DS), Asp-82, and Lys-112 contribute to the 3-methyl-2-oxobutanoate site. A Mg(2+)-binding site is contributed by Glu-114. Residue Glu-181 is the Proton acceptor of the active site.

This sequence belongs to the PanB family. Homodecamer; pentamer of dimers. Mg(2+) is required as a cofactor.

It is found in the cytoplasm. It carries out the reaction 3-methyl-2-oxobutanoate + (6R)-5,10-methylene-5,6,7,8-tetrahydrofolate + H2O = 2-dehydropantoate + (6S)-5,6,7,8-tetrahydrofolate. It participates in cofactor biosynthesis; (R)-pantothenate biosynthesis; (R)-pantoate from 3-methyl-2-oxobutanoate: step 1/2. In terms of biological role, catalyzes the reversible reaction in which hydroxymethyl group from 5,10-methylenetetrahydrofolate is transferred onto alpha-ketoisovalerate to form ketopantoate. The protein is 3-methyl-2-oxobutanoate hydroxymethyltransferase of Bacillus anthracis (strain A0248).